The primary structure comprises 324 residues: Fructose-1,6-bisphosphatase class 1 (324 aa).

Mg(2+) contacts are provided by glutamate 88, aspartate 107, leucine 109, and aspartate 110. Substrate contacts are provided by residues 110–113 (DGSS), asparagine 199, and lysine 265. Glutamate 271 contacts Mg(2+).

It belongs to the FBPase class 1 family. As to quaternary structure, homotetramer. The cofactor is Mg(2+).

It localises to the cytoplasm. It catalyses the reaction beta-D-fructose 1,6-bisphosphate + H2O = beta-D-fructose 6-phosphate + phosphate. It functions in the pathway carbohydrate biosynthesis; gluconeogenesis. This is Fructose-1,6-bisphosphatase class 1 from Neisseria meningitidis serogroup C (strain 053442).